The primary structure comprises 485 residues: tRNA sulfurtransferase (485 aa).

Residues 61–165 (EELIALLQRI…DDKMMLVKTR (105 aa)) form the THUMP domain. Residues 183–184 (LI), Lys265, Gly287, and Gln296 each bind ATP. A disulfide bridge connects residues Cys344 and Cys456. Positions 404-483 (LGENEVILDI…FSNVRVFAKN (80 aa)) constitute a Rhodanese domain. Cys456 (cysteine persulfide intermediate) is an active-site residue.

The protein belongs to the ThiI family.

The protein resides in the cytoplasm. It carries out the reaction [ThiI sulfur-carrier protein]-S-sulfanyl-L-cysteine + a uridine in tRNA + 2 reduced [2Fe-2S]-[ferredoxin] + ATP + H(+) = [ThiI sulfur-carrier protein]-L-cysteine + a 4-thiouridine in tRNA + 2 oxidized [2Fe-2S]-[ferredoxin] + AMP + diphosphate. The enzyme catalyses [ThiS sulfur-carrier protein]-C-terminal Gly-Gly-AMP + S-sulfanyl-L-cysteinyl-[cysteine desulfurase] + AH2 = [ThiS sulfur-carrier protein]-C-terminal-Gly-aminoethanethioate + L-cysteinyl-[cysteine desulfurase] + A + AMP + 2 H(+). Its pathway is cofactor biosynthesis; thiamine diphosphate biosynthesis. Functionally, catalyzes the ATP-dependent transfer of a sulfur to tRNA to produce 4-thiouridine in position 8 of tRNAs, which functions as a near-UV photosensor. Also catalyzes the transfer of sulfur to the sulfur carrier protein ThiS, forming ThiS-thiocarboxylate. This is a step in the synthesis of thiazole, in the thiamine biosynthesis pathway. The sulfur is donated as persulfide by IscS. The chain is tRNA sulfurtransferase from Haemophilus influenzae (strain 86-028NP).